A 461-amino-acid chain; its full sequence is MPMLKIYNSITRQKQEFKPITPGKVGMYVCGVTVYDLCHIGHGRTFVSFDMIVRYLRYAGYEVNFQRNITDIDDKIIKRANENQEDCNTLTDRLIGEMHKDFDALNMIRPDFEPRATLHIAEIIDMVERLLARGHAYVAADGDVLFSVASFPEYGRLSGQNLEQLQAGARVEVDDNKQNPMDFVLWKMSKPGEPTWESPWGPGRPGWHIECSAMNSKHLGLHFDIHGGGSDLQFPHHENEIAQSCCAHDTPYVNYWMHTGMVMVDREKMSKSLGNFFTIRDVLGHYDPETVRYFLLSGHYRSQINYSEENLKQARAALERLYTAIKDVDLTVAPAPAEEFVAKFKAAMDDDFNTPEAYSVLFDMVREINRLKTTDMAQASAMAVAMKQLADVLGLLHQAPDAFFKGEGSDDEVAEIEALIVERNRARAEKDWPAADVARNRLNELGVVLEDGPSGTTWRKK.

Residue Cys30 coordinates Zn(2+). Positions 32 to 42 (VTVYDLCHIGH) match the 'HIGH' region motif. Cys211, His236, and Glu240 together coordinate Zn(2+). A 'KMSKS' region motif is present at residues 268–272 (KMSKS). Lys271 serves as a coordination point for ATP.

The protein belongs to the class-I aminoacyl-tRNA synthetase family. As to quaternary structure, monomer. Requires Zn(2+) as cofactor.

The protein localises to the cytoplasm. It carries out the reaction tRNA(Cys) + L-cysteine + ATP = L-cysteinyl-tRNA(Cys) + AMP + diphosphate. The sequence is that of Cysteine--tRNA ligase from Shewanella sp. (strain MR-7).